A 711-amino-acid chain; its full sequence is Amino-acid racemase (711 aa).

Residues 1–14 lie on the Cytoplasmic side of the membrane; it reads MTKNESYSGIDYFR. A helical membrane pass occupies residues 15–35; it reads FIAALLIVAIHTSPLFSFSET. Over 36–37 the chain is Extracellular; it reads GN. A helical transmembrane segment spans residues 38-58; that stretch reads FIFTRIVAPVAVPFFFMTSGF. The Cytoplasmic portion of the chain corresponds to 59 to 78; that stretch reads FLISRYTCNAEKLGAFIKKT. A helical membrane pass occupies residues 79–99; it reads TLIYGVAILLYIPINVYNGYF. The Extracellular segment spans residues 100-117; sequence KMDNLLPNIIKDIVFDGT. Residues 118 to 138 form a helical membrane-spanning segment; sequence LYHLWYLPASIIGAAIAWYLV. At 139–146 the chain is on the cytoplasmic side; sequence KKVHYRKA. The chain crosses the membrane as a helical span at residues 147-167; it reads FLIASILYIIGLFGDSYYGIV. Residues 168–188 are Extracellular-facing; it reads KSVSCLNVFYNLIFQLTDYTR. The helical transmembrane segment at 189 to 209 threads the bilayer; that stretch reads NGIFFAPIFFVLGGYISDSPN. The Cytoplasmic portion of the chain corresponds to 210–241; it reads RYRKKNYIRIYSLFCLMFGKTLTLQHFDIQKH. Residues 242–262 form a helical membrane-spanning segment; that stretch reads DSMYVLLLPSVWCLFNLLLHF. Topologically, residues 263–306 are extracellular; the sequence is RGKRRTGLRTISLDQLYHSSVYDCCNTIVCAELLHLQSLLVENS. A helical transmembrane segment spans residues 307-327; the sequence is LVHYIAVCFASVVLAVVITAL. Topologically, residues 328–711 are cytoplasmic; the sequence is LSSLKPKKAK…EHRLNIIRRA (384 aa). Positions 336 to 711 are racemase; sequence AKHTADTDRA…EHRLNIIRRA (376 aa). Lys-376 acts as the Proton acceptor in catalysis. Lys-376 carries the post-translational modification N6-(pyridoxal phosphate)lysine. Arg-470 is a binding site for substrate. The active-site Proton acceptor is Tyr-602. Met-651 lines the substrate pocket.

This sequence in the N-terminal section; belongs to the acyltransferase 3 family. The protein in the C-terminal section; belongs to the alanine racemase family. Pyridoxal 5'-phosphate is required as a cofactor.

The protein resides in the cell membrane. The chain is Amino-acid racemase (vanTG) from Enterococcus faecalis (Streptococcus faecalis).